An 869-amino-acid polypeptide reads, in one-letter code: Valine--tRNA ligase (869 aa).

The 'HIGH' region signature appears at 47–57; it reads PYPTGNFHIGN. The 'KMSKS' region signature appears at 521–525; sequence KMSKS. Lysine 524 is a binding site for ATP.

This sequence belongs to the class-I aminoacyl-tRNA synthetase family. ValS type 2 subfamily.

The protein localises to the cytoplasm. It catalyses the reaction tRNA(Val) + L-valine + ATP = L-valyl-tRNA(Val) + AMP + diphosphate. Its function is as follows. Catalyzes the attachment of valine to tRNA(Val). As ValRS can inadvertently accommodate and process structurally similar amino acids such as threonine, to avoid such errors, it has a 'posttransfer' editing activity that hydrolyzes mischarged Thr-tRNA(Val) in a tRNA-dependent manner. This is Valine--tRNA ligase from Methanosarcina barkeri (strain Fusaro / DSM 804).